Consider the following 173-residue polypeptide: Alpha-crystallin A chain (173 aa).

M1 is subject to N-acetylmethionine. The tract at residues 1–63 is required for complex formation with BFSP1 and BFSP2; sequence MDVTIQHPWF…RTVLDSGISE (63 aa). Deamidated glutamine; partial is present on Q6. At S45 the chain carries Phosphoserine. At Q50 the chain carries Deamidated glutamine; partial. In terms of domain architecture, sHSP spans 52 to 162; the sequence is LFRTVLDSGI…GHSERAIPVS (111 aa). At K70 the chain carries N6-acetyllysine. Position 90 is a deamidated glutamine; partial (Q90). K99 is subject to N6-acetyllysine. H100 lines the Zn(2+) pocket. N101 carries the deamidated asparagine; partial modification. Positions 102 and 107 each coordinate Zn(2+). Phosphoserine is present on S122. N123 is subject to Deamidated asparagine; partial. Residues 145–173 are disordered; the sequence is KVQSGLDAGHSERAIPVSREEKPSSAPSS. Q147 carries the post-translational modification Deamidated glutamine; partial. Residues 153–167 are compositionally biased toward basic and acidic residues; the sequence is GHSERAIPVSREEKP. H154 contacts Zn(2+). A glycan (O-linked (GlcNAc) serine) is linked at S162.

Belongs to the small heat shock protein (HSP20) family. Heteromer composed of three CRYAA and one CRYAB subunits. Inter-subunit bridging via zinc ions enhances stability, which is crucial as there is no protein turn over in the lens. Can also form homodimers and homotetramers (dimers of dimers) which serve as the building blocks of homooligomers. Within homooligomers, the zinc-binding motif is created from residues of 3 different molecules. His-100 and Glu-102 from one molecule are ligands of the zinc ion, and His-107 and His-154 residues from additional molecules complete the site with tetrahedral coordination geometry. Part of a complex required for lens intermediate filament formation composed of BFSP1, BFSP2 and CRYAA. In terms of processing, acetylation at Lys-70 may increase chaperone activity. Undergoes age-dependent proteolytical cleavage at the C-terminus.

The protein resides in the cytoplasm. The protein localises to the nucleus. Functionally, contributes to the transparency and refractive index of the lens. Acts as a chaperone, preventing aggregation of various proteins under a wide range of stress conditions. Required for the correct formation of lens intermediate filaments as part of a complex composed of BFSP1, BFSP2 and CRYAA. The polypeptide is Alpha-crystallin A chain (CRYAA) (Cavia porcellus (Guinea pig)).